An 840-amino-acid polypeptide reads, in one-letter code: Phosphatidylglycerol lysyltransferase (840 aa).

At 1–8 the chain is on the cytoplasmic side; that stretch reads MNQEVKNK. Residues 9–29 traverse the membrane as a helical segment; that stretch reads IFSILKITFATALFIFVAITL. Topologically, residues 30-52 are extracellular; it reads YRELSGINFKDTLVEFSKINRMS. A helical transmembrane segment spans residues 53-73; sequence LVLLFIGGGASLVILSMYDVI. The Cytoplasmic segment spans residues 74–89; that stretch reads LSRALKMDISLGKVLR. The helical transmembrane segment at 90–110 threads the bilayer; it reads VSYIINALNAIVGFGGFIGAG. Residues 111 to 128 are Extracellular-facing; the sequence is VRAMVYKNYTHDKKKLVH. Residues 129–149 form a helical membrane-spanning segment; sequence FISLILISMLTGLSLLSLLIV. Topologically, residues 150 to 161 are cytoplasmic; the sequence is FHVFDASLILDK. A helical membrane pass occupies residues 162–182; sequence ITWVRWVLYVVSFFLPLFIIY. At 183–200 the chain is on the extracellular side; sequence SMVRPPDKNNRFVGLYCT. A helical membrane pass occupies residues 201 to 221; it reads LVSCVEWLAAAVVLYFCGVIV. Over 222–229 the chain is Cytoplasmic; sequence DAHVSFMS. Residues 230 to 250 form a helical membrane-spanning segment; sequence FIAIFIIAALSGLVSFIPGGF. Residues 251-271 lie on the Extracellular side of the membrane; it reads GAFDLVVLLGFKTLGVPEEKV. A helical membrane pass occupies residues 272 to 292; that stretch reads LLMLLLYRFAYYFVPVIIALI. Residues 293–337 are Cytoplasmic-facing; it reads LSSFEFGTSAKKYIEGSKYFIPAKDVTSFLMSYQKDIIAKIPSLS. A helical transmembrane segment spans residues 338–358; that stretch reads LAILVFFTSMIFFVNNLTIVY. The Extracellular portion of the chain corresponds to 359–369; sequence DALYDGNHLTY. Residues 370–390 form a helical membrane-spanning segment; the sequence is YILLAIHTSACLLLLLNVVGI. At 391-394 the chain is on the cytoplasmic side; the sequence is YKQS. The next 2 membrane-spanning stretches (helical) occupy residues 395–415 and 416–436; these read RRAI…TFFT and YASY…IVAF. The Cytoplasmic segment spans residues 437-450; sequence RRARRLKRPVRMRN. A helical membrane pass occupies residues 451-471; the sequence is IVAMLLFSLFILYVNHIFIAG. Residues 472–489 are Extracellular-facing; sequence TLYALDIYTIEMHTSVLR. Residues 490–510 traverse the membrane as a helical segment; it reads YYFWLTILIIAIIIGMIAWLF. The Cytoplasmic segment spans residues 511–840; it reads DYQFSKVRIS…SKVMRVIRHK (330 aa).

Belongs to the LPG synthase family.

It localises to the cell membrane. The catalysed reaction is L-lysyl-tRNA(Lys) + a 1,2-diacyl-sn-glycero-3-phospho-(1'-sn-glycerol) = a 1,2-diacyl-sn-glycero-3-phospho-1'-(3'-O-L-lysyl)-sn-glycerol + tRNA(Lys). Its function is as follows. Catalyzes the transfer of a lysyl group from L-lysyl-tRNA(Lys) to membrane-bound phosphatidylglycerol (PG), which produces lysylphosphatidylglycerol (LPG), a major component of the bacterial membrane with a positive net charge. LPG synthesis contributes to bacterial virulence as it is involved in the resistance mechanism against cationic antimicrobial peptides (CAMP) produces by the host's immune system (defensins, cathelicidins) and by the competing microorganisms (bacteriocins). In fact, the modification of anionic phosphatidylglycerol with positively charged L-lysine results in repulsion of the peptides. The chain is Phosphatidylglycerol lysyltransferase (mprF) from Staphylococcus aureus (strain COL).